A 521-amino-acid polypeptide reads, in one-letter code: D-aminoacyl-tRNA deacylase (521 aa).

2 disordered regions span residues 323-353 (AVGTVHTKDSTDIDTGTNHNVDAERTESEDS) and 499-521 (VFSTSSSSSSSSSSSSSSSSSSS). Basic and acidic residues predominate over residues 343–353 (VDAERTESEDS). A compositionally biased stretch (low complexity) spans 501-521 (STSSSSSSSSSSSSSSSSSSS).

It belongs to the DtdA deacylase family. As to quaternary structure, monomer. It depends on Zn(2+) as a cofactor.

It catalyses the reaction a D-aminoacyl-tRNA + H2O = a tRNA + a D-alpha-amino acid + H(+). The enzyme catalyses glycyl-tRNA(Ala) + H2O = tRNA(Ala) + glycine + H(+). Functionally, D-aminoacyl-tRNA deacylase with broad substrate specificity. By recycling D-aminoacyl-tRNA to D-amino acids and free tRNA molecules, this enzyme counteracts the toxicity associated with the formation of D-aminoacyl-tRNA entities in vivo. This is D-aminoacyl-tRNA deacylase from Haloquadratum walsbyi (strain DSM 16790 / HBSQ001).